Here is a 211-residue protein sequence, read N- to C-terminus: ATP-dependent Clp protease proteolytic subunit (211 aa).

The Nucleophile role is filled by S114. H139 is a catalytic residue.

It belongs to the peptidase S14 family. In terms of assembly, fourteen ClpP subunits assemble into 2 heptameric rings which stack back to back to give a disk-like structure with a central cavity, resembling the structure of eukaryotic proteasomes.

It localises to the cytoplasm. It carries out the reaction Hydrolysis of proteins to small peptides in the presence of ATP and magnesium. alpha-casein is the usual test substrate. In the absence of ATP, only oligopeptides shorter than five residues are hydrolyzed (such as succinyl-Leu-Tyr-|-NHMec, and Leu-Tyr-Leu-|-Tyr-Trp, in which cleavage of the -Tyr-|-Leu- and -Tyr-|-Trp bonds also occurs).. Cleaves peptides in various proteins in a process that requires ATP hydrolysis. Has a chymotrypsin-like activity. Plays a major role in the degradation of misfolded proteins. The polypeptide is ATP-dependent Clp protease proteolytic subunit (Pseudomonas fluorescens (strain ATCC BAA-477 / NRRL B-23932 / Pf-5)).